We begin with the raw amino-acid sequence, 124 residues long: UPF0342 protein DSY2926 (124 aa).

This sequence belongs to the UPF0342 family.

This chain is UPF0342 protein DSY2926, found in Desulfitobacterium hafniense (strain Y51).